The following is a 127-amino-acid chain: Serum amyloid A protein (127 aa).

The N-terminal stretch at 1-18 (MKLLTSLFLLSLVLCVNS) is a signal peptide. Gln-19 carries the post-translational modification Pyrrolidone carboxylic acid. The tract at residues 89-127 (GGSSGRGVEDSMADQEANRWGRSGKDPNRYRPKGLDPKY) is disordered. Basic and acidic residues predominate over residues 104-127 (EANRWGRSGKDPNRYRPKGLDPKY).

This sequence belongs to the SAA family. As to expression, expressed by the liver; secreted in plasma.

It localises to the secreted. Its function is as follows. Major acute phase reactant. Apolipoprotein of the HDL complex. The polypeptide is Serum amyloid A protein (SAA1) (Notamacropus eugenii (Tammar wallaby)).